The following is a 196-amino-acid chain: Peroxiredoxin TSA1-B (196 aa).

The Thioredoxin domain maps to 3–161; sequence PVVQQPAPSF…SLRLLEAFQF (159 aa). A substrate-binding site is contributed by 45–47; the sequence is TFV. C48 serves as the catalytic Cysteine sulfenic acid (-SOH) intermediate. R124 is a binding site for substrate. Residues 173-196 are disordered; sequence WHPGDETIKPSPEASKEYFNKVNK. Residues 175–196 show a composition bias toward basic and acidic residues; the sequence is PGDETIKPSPEASKEYFNKVNK.

This sequence belongs to the peroxiredoxin family. AhpC/Prx1 subfamily. As to quaternary structure, homodimer; disulfide-linked, upon oxidation.

It is found in the cell surface. It localises to the nucleus. The protein resides in the cytoplasm. The enzyme catalyses a hydroperoxide + [thioredoxin]-dithiol = an alcohol + [thioredoxin]-disulfide + H2O. Functionally, thiol-specific peroxidase that catalyzes the reduction of hydrogen peroxide and organic hydroperoxides to water and alcohols, respectively. Plays a role in cell protection against oxidative stress by detoxifying peroxides and as sensor of hydrogen peroxide-mediated signaling events. Also involved in the correct composition of the hyphal cell wall. This Candida albicans (strain SC5314 / ATCC MYA-2876) (Yeast) protein is Peroxiredoxin TSA1-B.